Consider the following 115-residue polypeptide: Evasin P1181 (115 aa).

An N-terminal signal peptide occupies residues 1–25; sequence MALNWSFRVIFVSAMWCALLKFATL. 4 cysteine pairs are disulfide-bonded: Cys-38-Cys-58, Cys-54-Cys-94, Cys-70-Cys-99, and Cys-89-Cys-108. Residues Asn-45, Asn-72, and Asn-103 are each glycosylated (N-linked (GlcNAc...) asparagine).

It is found in the secreted. In terms of biological role, salivary chemokine-binding protein which binds to host chemokines CCL3 and CCL4. This Amblyomma maculatum (Gulf Coast tick) protein is Evasin P1181.